Consider the following 348-residue polypeptide: Dihydroorotase (348 aa).

2 residues coordinate Zn(2+): H14 and H16. Residues 16–18 (HLR) and N42 contribute to the substrate site. Positions 100, 137, and 175 each coordinate Zn(2+). The residue at position 100 (K100) is an N6-carboxylysine. H137 is a substrate binding site. L220 lines the substrate pocket. D248 serves as a coordination point for Zn(2+). Residue D248 is part of the active site. Residues H252 and A264 each coordinate substrate.

The protein belongs to the metallo-dependent hydrolases superfamily. DHOase family. Class II DHOase subfamily. As to quaternary structure, homodimer. Zn(2+) is required as a cofactor.

The catalysed reaction is (S)-dihydroorotate + H2O = N-carbamoyl-L-aspartate + H(+). Its pathway is pyrimidine metabolism; UMP biosynthesis via de novo pathway; (S)-dihydroorotate from bicarbonate: step 3/3. In terms of biological role, catalyzes the reversible cyclization of carbamoyl aspartate to dihydroorotate. This chain is Dihydroorotase, found in Pseudomonas fluorescens (strain SBW25).